A 113-amino-acid chain; its full sequence is Ig heavy chain V-III region E109 (113 aa).

In terms of domain architecture, Ig-like spans 1-113; the sequence is EVKLEESGGG…YWGQGTLVTV (113 aa). Residues cysteine 22 and cysteine 98 are joined by a disulfide bond.

This chain is Ig heavy chain V-III region E109, found in Mus musculus (Mouse).